Here is a 1109-residue protein sequence, read N- to C-terminus: Pesticidal crystal protein Cry28Aa (1109 aa).

Belongs to the delta endotoxin family.

Its function is as follows. Promotes colloidosmotic lysis by binding to the midgut epithelial cells of insects. The chain is Pesticidal crystal protein Cry28Aa (cry28Aa) from Bacillus thuringiensis subsp. finitimus.